A 406-amino-acid polypeptide reads, in one-letter code: Renin (406 aa).

The N-terminal stretch at 1–23 is a signal peptide; it reads MDGWRRMPRWGLLLLLWGSCTFG. Positions 24-66 are cleaved as a propeptide — activation peptide; it reads LPTDTTTFKRIFLKRMPSIRESLKERGVDMARLGPEWSQPMKR. Residue Asn-71 is glycosylated (N-linked (GlcNAc...) asparagine). In terms of domain architecture, Peptidase A1 spans 86-403; sequence YYGEIGIGTP…DRRNNRIGFA (318 aa). Asp-104 is a catalytic residue. Residues Cys-117 and Cys-124 are joined by a disulfide bond. N-linked (GlcNAc...) asparagine glycosylation occurs at Asn-141. Cys-283 and Cys-287 are oxidised to a cystine. Residue Asp-292 is part of the active site. Cys-325 and Cys-362 are joined by a disulfide.

It belongs to the peptidase A1 family. As to quaternary structure, interacts with ATP6AP2.

It localises to the secreted. Its subcellular location is the membrane. It catalyses the reaction Cleavage of Leu-|-Xaa bond in angiotensinogen to generate angiotensin I.. Its activity is regulated as follows. Interaction with ATP6AP2 results in a 5-fold increased efficiency in angiotensinogen processing. In terms of biological role, renin is a highly specific endopeptidase, whose only known function is to generate angiotensin I from angiotensinogen in the plasma, initiating a cascade of reactions that produce an elevation of blood pressure and increased sodium retention by the kidney. The chain is Renin (REN) from Macaca mulatta (Rhesus macaque).